Reading from the N-terminus, the 482-residue chain is Ribosomal RNA small subunit methyltransferase F (482 aa).

S-adenosyl-L-methionine contacts are provided by residues 119 to 125 (ASAPGSK), glutamate 143, aspartate 170, and aspartate 188. Catalysis depends on cysteine 241, which acts as the Nucleophile.

It belongs to the class I-like SAM-binding methyltransferase superfamily. RsmB/NOP family.

The protein resides in the cytoplasm. It catalyses the reaction cytidine(1407) in 16S rRNA + S-adenosyl-L-methionine = 5-methylcytidine(1407) in 16S rRNA + S-adenosyl-L-homocysteine + H(+). Its function is as follows. Specifically methylates the cytosine at position 1407 (m5C1407) of 16S rRNA. This chain is Ribosomal RNA small subunit methyltransferase F, found in Shewanella sp. (strain MR-7).